The following is a 216-amino-acid chain: Protein-L-isoaspartate O-methyltransferase (216 aa).

Residue Ser64 is part of the active site.

The protein belongs to the methyltransferase superfamily. L-isoaspartyl/D-aspartyl protein methyltransferase family.

The protein localises to the cytoplasm. It catalyses the reaction [protein]-L-isoaspartate + S-adenosyl-L-methionine = [protein]-L-isoaspartate alpha-methyl ester + S-adenosyl-L-homocysteine. Its function is as follows. Catalyzes the methyl esterification of L-isoaspartyl residues in peptides and proteins that result from spontaneous decomposition of normal L-aspartyl and L-asparaginyl residues. It plays a role in the repair and/or degradation of damaged proteins. The protein is Protein-L-isoaspartate O-methyltransferase of Paracoccus denitrificans (strain Pd 1222).